The primary structure comprises 158 residues: Cyclic pyranopterin monophosphate synthase (158 aa).

Substrate is bound by residues 75–77 (LCH) and 113–114 (ME). The active site involves Asp128.

Belongs to the MoaC family. As to quaternary structure, homohexamer; trimer of dimers.

It carries out the reaction (8S)-3',8-cyclo-7,8-dihydroguanosine 5'-triphosphate = cyclic pyranopterin phosphate + diphosphate. The protein operates within cofactor biosynthesis; molybdopterin biosynthesis. Functionally, catalyzes the conversion of (8S)-3',8-cyclo-7,8-dihydroguanosine 5'-triphosphate to cyclic pyranopterin monophosphate (cPMP). The polypeptide is Cyclic pyranopterin monophosphate synthase (Mannheimia succiniciproducens (strain KCTC 0769BP / MBEL55E)).